A 337-amino-acid chain; its full sequence is Large ribosomal subunit protein uL3 (337 aa).

A disordered region spans residues 1–20 (MASIHRPKRGSLAFSPRKRA).

It belongs to the universal ribosomal protein uL3 family. In terms of assembly, part of the 50S ribosomal subunit. Forms a cluster with proteins L14 and L24e.

Its function is as follows. One of the primary rRNA binding proteins, it binds directly near the 3'-end of the 23S rRNA, where it nucleates assembly of the 50S subunit. This chain is Large ribosomal subunit protein uL3, found in Methanosarcina acetivorans (strain ATCC 35395 / DSM 2834 / JCM 12185 / C2A).